The following is a 187-amino-acid chain: UPF0301 protein YqgE (187 aa).

Belongs to the UPF0301 (AlgH) family.

The protein is UPF0301 protein YqgE of Escherichia coli O127:H6 (strain E2348/69 / EPEC).